The primary structure comprises 445 residues: Mitochondrial-processing peptidase subunit alpha-2 (445 aa).

The N-terminal 13 residues, 1–13 (MIGRFIARNYTTS), are a transit peptide targeting the mitochondrion.

This sequence belongs to the peptidase M16 family. In terms of assembly, heterodimer of alpha and beta subunits, forming the mitochondrial processing protease (MPP) in which subunit alpha is involved in substrate recognition and binding and subunit beta is the catalytic subunit.

It localises to the mitochondrion matrix. Substrate recognition and binding subunit of the essential mitochondrial processing protease (MPP), which cleaves the mitochondrial sequence off newly imported precursors proteins. In Dictyostelium discoideum (Social amoeba), this protein is Mitochondrial-processing peptidase subunit alpha-2 (mppA2).